The following is a 162-amino-acid chain: Putative 4-hydroxy-4-methyl-2-oxoglutarate aldolase (162 aa).

Substrate is bound by residues 75-78 (GDML) and Arg-97. Asp-98 is an a divalent metal cation binding site.

This sequence belongs to the class II aldolase/RraA-like family. In terms of assembly, homotrimer. The cofactor is a divalent metal cation.

It catalyses the reaction 4-hydroxy-4-methyl-2-oxoglutarate = 2 pyruvate. It carries out the reaction oxaloacetate + H(+) = pyruvate + CO2. In terms of biological role, catalyzes the aldol cleavage of 4-hydroxy-4-methyl-2-oxoglutarate (HMG) into 2 molecules of pyruvate. Also contains a secondary oxaloacetate (OAA) decarboxylase activity due to the common pyruvate enolate transition state formed following C-C bond cleavage in the retro-aldol and decarboxylation reactions. The polypeptide is Putative 4-hydroxy-4-methyl-2-oxoglutarate aldolase (Pseudomonas paraeruginosa (strain DSM 24068 / PA7) (Pseudomonas aeruginosa (strain PA7))).